The primary structure comprises 481 residues: Glutamate--tRNA ligase (481 aa).

The 'HIGH' region motif lies at 11 to 21 (PSPTGLLHIGN). The short motif at 255-259 (KLSKR) is the 'KMSKS' region element. K258 is an ATP binding site.

Belongs to the class-I aminoacyl-tRNA synthetase family. Glutamate--tRNA ligase type 1 subfamily. As to quaternary structure, monomer.

Its subcellular location is the cytoplasm. It carries out the reaction tRNA(Glu) + L-glutamate + ATP = L-glutamyl-tRNA(Glu) + AMP + diphosphate. Its function is as follows. Catalyzes the attachment of glutamate to tRNA(Glu) in a two-step reaction: glutamate is first activated by ATP to form Glu-AMP and then transferred to the acceptor end of tRNA(Glu). This chain is Glutamate--tRNA ligase, found in Streptococcus pyogenes serotype M6 (strain ATCC BAA-946 / MGAS10394).